The primary structure comprises 406 residues: MLYYRNLALLSLLSLSSAAPSQVERSPDAVFKPRAVCTPTAGGSSSIDDVPAIRKAISSCGNGGTIVFPAGSTYYLNSVLDLAGCSNCDIQVEGLLMFSGSTEYWGGKTAMININKINALKLRSLTGSGVIDGNGQNAYDLFASNSDYERPTLLYITGGSNIEVSGLRQRNPPNVFNSVKGDAKDVTFTNLRMDATSRSDNPPKNTDGFDIGSSTHVTISSVSVSNDDDCVALKPGCNYVTVENVTCTGSHGISVGSLGKSSADTVQNVYAHRITMIDSTKAAGIKTYPSGNGHGLSTVKNVTFSDFNVRGCDYAFQIQSCYGESASYCASHPGNAILQDIIVKGFSGTTSGKDDWVVADLNCGARGTCDVSMSDFSVKAPSGKATVLCANTPSSLGVTCTSGASG.

The signal sequence occupies residues 1 to 18 (MLYYRNLALLSLLSLSSA). PbH1 repeat units lie at residues 183-213 (AKDV…DIGS), 214-235 (STHV…ALKP), 237-257 (CNYV…SVGS), and 299-320 (VKNV…QIQS). D228 (proton donor) is an active-site residue. N244 carries N-linked (GlcNAc...) asparagine glycosylation. The active site involves H251. The N-linked (GlcNAc...) asparagine glycan is linked to N301.

The protein belongs to the glycosyl hydrolase 28 family.

It localises to the secreted. Functionally, pectinolytic enzyme involved in the degradation of xylogalacturonan (xga), a galacturonan backbone heavily substituted with xylose, and which is one important component of the hairy regions of pectin. Activity requires a galacturonic acid backbone substituted with xylose. The sequence is that of Probable endo-xylogalacturonan hydrolase A (xghA) from Neosartorya fischeri (strain ATCC 1020 / DSM 3700 / CBS 544.65 / FGSC A1164 / JCM 1740 / NRRL 181 / WB 181) (Aspergillus fischerianus).